The primary structure comprises 37 residues: Large ribosomal subunit protein bL36c (37 aa).

It belongs to the bacterial ribosomal protein bL36 family.

It localises to the plastid. The protein localises to the chloroplast. This is Large ribosomal subunit protein bL36c (rpl36) from Chlamydomonas reinhardtii (Chlamydomonas smithii).